The sequence spans 314 residues: Protein phosphatase PTC7 homolog fig (314 aa).

Positions 43–309 (PYLVTVVQGR…DDITLILSSV (267 aa)) constitute a PPM-type phosphatase domain. Residues Asp-87, Gly-88, and Asp-232 each contribute to the Mn(2+) site.

The protein belongs to the PP2C family. Mg(2+) serves as cofactor. Requires Mn(2+) as cofactor.

The catalysed reaction is O-phospho-L-seryl-[protein] + H2O = L-seryl-[protein] + phosphate. The enzyme catalyses O-phospho-L-threonyl-[protein] + H2O = L-threonyl-[protein] + phosphate. In Drosophila sechellia (Fruit fly), this protein is Protein phosphatase PTC7 homolog fig.